A 559-amino-acid chain; its full sequence is Transcription activator of gluconeogenesis ERT1-2 (559 aa).

The zn(2)-C6 fungal-type DNA-binding region spans 23-51 (CIHCQRTHLTCDNNRPCERCVARGFADTC). Disordered stretches follow at residues 63-159 (DDKE…TPSQ), 231-263 (SNSLLLGNNSQSPNTHSPHNQDQPTPQAATPSA), and 329-349 (AGQPQNTNGNGNGSEAPDSPS). 2 stretches are compositionally biased toward low complexity: residues 139-159 (QGPQRQGAQQPQGGQSSTPSQ) and 231-244 (SNSLLLGNNSQSPN). Polar residues predominate over residues 245–260 (THSPHNQDQPTPQAAT). The region spanning 440 to 512 (ALLEYQKFIS…ELFSRIAFGD (73 aa)) is the PAS domain.

This sequence belongs to the ERT1/acuK family.

It is found in the nucleus. In terms of biological role, transcription factor which regulates nonfermentable carbon utilization. Activator of gluconeogenetic genes. This chain is Transcription activator of gluconeogenesis ERT1-2 (ERT1-2), found in Yarrowia lipolytica (strain CLIB 122 / E 150) (Yeast).